The sequence spans 445 residues: Phosphoglucosamine mutase (445 aa).

Ser-99 functions as the Phosphoserine intermediate in the catalytic mechanism. Mg(2+)-binding residues include Ser-99, Asp-242, Asp-244, and Asp-246. Ser-99 is subject to Phosphoserine.

The protein belongs to the phosphohexose mutase family. Mg(2+) serves as cofactor. Post-translationally, activated by phosphorylation.

The catalysed reaction is alpha-D-glucosamine 1-phosphate = D-glucosamine 6-phosphate. Its function is as follows. Catalyzes the conversion of glucosamine-6-phosphate to glucosamine-1-phosphate. This is Phosphoglucosamine mutase from Campylobacter jejuni subsp. jejuni serotype O:23/36 (strain 81-176).